The following is an 85-amino-acid chain: Small ribosomal subunit protein bS20 (85 aa).

Positions 1 to 22 (MANIKSAIKRAKLSEERRAHNA) are disordered.

The protein belongs to the bacterial ribosomal protein bS20 family.

Functionally, binds directly to 16S ribosomal RNA. The protein is Small ribosomal subunit protein bS20 of Bacillus cytotoxicus (strain DSM 22905 / CIP 110041 / 391-98 / NVH 391-98).